The following is a 633-amino-acid chain: Ankyrin repeat and SOCS box protein 2 (633 aa).

The 20-residue stretch at 26 to 45 (SEDELVQMAIEQSLADKTRG) folds into the UIM domain. 12 ANK repeats span residues 102–131 (APVD…NLSE), 135–165 (EGWL…VIDQ), 169–198 (QEET…EPDI), 202–231 (SRET…DTNH), 235–264 (RGWT…KVEA), 268–297 (YGIT…DINT), 301–330 (DSAS…DANK), 334–363 (DGML…RTRV), 366–395 (SGIS…DVNA), 408–437 (RRSS…DPNR), 438–467 (DVIN…NIDA), and 474–502 (TAFP…NGEP). At Ser369 the chain carries Phosphoserine. An SOCS box domain is found at 579-633 (EDWAVIKEKAEPPRPLAHLCRLRVRKAIGKYRIKLLDTLPLPGRLIRYLKYENTQ).

The protein belongs to the ankyrin SOCS box (ASB) family. In terms of assembly, component of a probable ECS E3 ubiquitin-protein ligase complex which contains CUL5, either RBX1 or RNF7/RBX2, Elongin BC complex (ELOB and ELOC) and ASB2. Interacts with SKP2. Through its interaction with SKP2, likely to bridge the formation of dimeric E3-ubiquitin-protein ligase complexes composed of an ECS complex and an SCF(SKP2) complex. Interacts with JAK2; the interaction targets JAK2 for Notch-mediated proteasomal degradation. Interacts with TCF3/E2A; the interaction is mediated by SKP2 and targets TCF3 for Notch-mediated proteasomal degradation. Interacts with DES. Monoubiquitinated.

It is found in the cytoplasm. The protein localises to the cytoskeleton. The protein resides in the stress fiber. Its subcellular location is the myofibril. It localises to the sarcomere. It is found in the z line. Its pathway is protein modification; protein ubiquitination. In terms of biological role, substrate-recognition component of a SCF-like ECS (Elongin-Cullin-SOCS-box protein) E3 ubiquitin-protein ligase complex which mediates the ubiquitination and subsequent proteasomal degradation of target proteins. Mediates Notch-induced ubiquitination and degradation of substrates including E2A and JAK2. Required during embryonic heart development for complete heart looping. Required for cardiomyocyte differentiation. Involved in myogenic differentiation and targets filamin FLNB for proteasomal degradation but not filamin FLNA. Also targets DES for proteasomal degradation. Acts as a negative regulator of skeletal muscle mass. The protein is Ankyrin repeat and SOCS box protein 2 of Bos taurus (Bovine).